Reading from the N-terminus, the 506-residue chain is Sucrose transport protein SUT3 (506 aa).

At 1-20 the chain is on the cytoplasmic side; that stretch reads MAVDMELDGGGDGKGKAPPQ. A helical membrane pass occupies residues 21–41; that stretch reads ISLSGLFLACMVAGGVQYGWA. At 42–54 the chain is on the extracellular side; the sequence is LQLSLLTPYVQTL. A helical membrane pass occupies residues 55 to 75; it reads GIPHALTSVMWLCGPIAGLIV. The Cytoplasmic portion of the chain corresponds to 76-94; sequence QPCVGLYSDKCTSSLGRRR. Residues 95–115 form a helical membrane-spanning segment; that stretch reads PFILTGCIIICISVIVIGFSS. The Extracellular portion of the chain corresponds to 116-135; it reads DIGYALGDTTEDCKVYRGPR. The chain crosses the membrane as a helical span at residues 136 to 156; sequence YHAAAAFILGFWLLDFSNNTV. Residues 157 to 171 are Cytoplasmic-facing; sequence QGPARALMADLSGRH. A helical transmembrane segment spans residues 172–192; the sequence is GPSAANAIFCSWMALGNILGY. Residues 193–220 are Extracellular-facing; sequence SSGSTNDWHKWFPFLMTRACCEACANLK. A helical transmembrane segment spans residues 221 to 241; sequence AAFLVAVVFLGLSTAVTMVFA. Over 242–275 the chain is Cytoplasmic; that stretch reads REVALDPVAAAKRNEGEASGLLAVFKGMKNLPVG. The chain crosses the membrane as a helical span at residues 276–296; that stretch reads MPSVLIVTGLTWLSWFPFILF. The Extracellular segment spans residues 297 to 327; the sequence is DTDWMGREIYHGRPDGSPAEVTAFQEGVRQG. A helical transmembrane segment spans residues 328-348; the sequence is AFGLLLNSIVLGISSFLIEPM. Residues 349–355 lie on the Cytoplasmic side of the membrane; it reads CRRLGAR. The helical transmembrane segment at 356–376 threads the bilayer; it reads AVWVMSSAVVCVAMAAVSVLS. The Extracellular portion of the chain corresponds to 377–404; the sequence is AWSLGDFGGSVQDAARAPAEEGGVRASA. Residues 405-425 traverse the membrane as a helical segment; it reads LALFVFLGLPFAVLCSVPFAV. Residues 426-441 lie on the Cytoplasmic side of the membrane; the sequence is TAQLAASRGGGQGLCT. Residues 442–462 traverse the membrane as a helical segment; sequence GVLNISIVVPQMAIALGAGPW. The Extracellular segment spans residues 463 to 470; the sequence is DELFGEGN. Residues 471–491 traverse the membrane as a helical segment; it reads IPAFAMASVFAAAAAAAGVVL. Topologically, residues 492 to 506 are cytoplasmic; the sequence is LPKVSVRSVSMAGGH.

This sequence belongs to the glycoside-pentoside-hexuronide (GPH) cation symporter transporter (TC 2.A.2.4) family. Homodimer. In terms of tissue distribution, widely expressed. Highest expression in sink leaves and lowest in germinating seeds.

It localises to the cell membrane. The protein operates within glycan biosynthesis; sucrose metabolism. Functionally, responsible for the transport of sucrose into the cell, with the concomitant uptake of protons (symport system). May also transport other glucosides. The polypeptide is Sucrose transport protein SUT3 (SUT3) (Oryza sativa subsp. japonica (Rice)).